The chain runs to 270 residues: Tryptophan synthase alpha chain (270 aa).

Residues Glu-49 and Asp-60 each act as proton acceptor in the active site.

This sequence belongs to the TrpA family. Tetramer of two alpha and two beta chains.

It catalyses the reaction (1S,2R)-1-C-(indol-3-yl)glycerol 3-phosphate + L-serine = D-glyceraldehyde 3-phosphate + L-tryptophan + H2O. It functions in the pathway amino-acid biosynthesis; L-tryptophan biosynthesis; L-tryptophan from chorismate: step 5/5. Functionally, the alpha subunit is responsible for the aldol cleavage of indoleglycerol phosphate to indole and glyceraldehyde 3-phosphate. The sequence is that of Tryptophan synthase alpha chain from Buchnera aphidicola subsp. Melaphis rhois.